The chain runs to 331 residues: DNA-directed RNA polymerase subunit alpha (331 aa).

The segment at 1–235 is alpha N-terminal domain (alpha-NTD); the sequence is MTMHIRWRGM…KHLNPFVQYR (235 aa). The segment at 255–331 is alpha C-terminal domain (alpha-CTD); that stretch reads QLEAKLNMTL…GMRVPNQPLF (77 aa).

It belongs to the RNA polymerase alpha chain family. Homodimer. The RNAP catalytic core consists of 2 alpha, 1 beta, 1 beta' and 1 omega subunit. When a sigma factor is associated with the core the holoenzyme is formed, which can initiate transcription.

It carries out the reaction RNA(n) + a ribonucleoside 5'-triphosphate = RNA(n+1) + diphosphate. Its function is as follows. DNA-dependent RNA polymerase catalyzes the transcription of DNA into RNA using the four ribonucleoside triphosphates as substrates. This is DNA-directed RNA polymerase subunit alpha from Rhodopirellula baltica (strain DSM 10527 / NCIMB 13988 / SH1).